The sequence spans 213 residues: dITP/XTP pyrophosphatase (213 aa).

17-22 (SNNAGK) is a substrate binding site. The Mg(2+) site is built by Glu49 and Asp78. The active-site Proton acceptor is Asp78. Substrate contacts are provided by residues Ser79, 164–167 (FGYD), Lys187, and 192–193 (HR).

Belongs to the HAM1 NTPase family. In terms of assembly, homodimer. Mg(2+) is required as a cofactor.

It carries out the reaction XTP + H2O = XMP + diphosphate + H(+). The catalysed reaction is dITP + H2O = dIMP + diphosphate + H(+). It catalyses the reaction ITP + H2O = IMP + diphosphate + H(+). In terms of biological role, pyrophosphatase that catalyzes the hydrolysis of nucleoside triphosphates to their monophosphate derivatives, with a high preference for the non-canonical purine nucleotides XTP (xanthosine triphosphate), dITP (deoxyinosine triphosphate) and ITP. Seems to function as a house-cleaning enzyme that removes non-canonical purine nucleotides from the nucleotide pool, thus preventing their incorporation into DNA/RNA and avoiding chromosomal lesions. The polypeptide is dITP/XTP pyrophosphatase (Bordetella bronchiseptica (strain ATCC BAA-588 / NCTC 13252 / RB50) (Alcaligenes bronchisepticus)).